The sequence spans 663 residues: Probable rhamnogalacturonate lyase B (663 aa).

The signal sequence occupies residues 1 to 19 (MRLRTSLGVASACASVASA). 10 N-linked (GlcNAc...) asparagine glycosylation sites follow: N27, N110, N143, N239, N285, N495, N535, N569, N597, and N638.

The protein belongs to the polysaccharide lyase 4 family.

The protein resides in the secreted. It catalyses the reaction Endotype eliminative cleavage of L-alpha-rhamnopyranosyl-(1-&gt;4)-alpha-D-galactopyranosyluronic acid bonds of rhamnogalacturonan I domains in ramified hairy regions of pectin leaving L-rhamnopyranose at the reducing end and 4-deoxy-4,5-unsaturated D-galactopyranosyluronic acid at the non-reducing end.. Its function is as follows. Pectinolytic enzymes consist of four classes of enzymes: pectin lyase, polygalacturonase, pectin methylesterase and rhamnogalacturonase. Degrades the rhamnogalacturonan I (RG-I) backbone of pectin. The chain is Probable rhamnogalacturonate lyase B (rglB) from Aspergillus flavus (strain ATCC 200026 / FGSC A1120 / IAM 13836 / NRRL 3357 / JCM 12722 / SRRC 167).